The chain runs to 352 residues: Methylthioribose-1-phosphate isomerase (352 aa).

Residues R49–A51, R93, and Q202 each bind substrate. D243 (proton donor) is an active-site residue. A substrate-binding site is contributed by N253–K254.

Belongs to the eIF-2B alpha/beta/delta subunits family. MtnA subfamily.

It carries out the reaction 5-(methylsulfanyl)-alpha-D-ribose 1-phosphate = 5-(methylsulfanyl)-D-ribulose 1-phosphate. The protein operates within amino-acid biosynthesis; L-methionine biosynthesis via salvage pathway; L-methionine from S-methyl-5-thio-alpha-D-ribose 1-phosphate: step 1/6. Functionally, catalyzes the interconversion of methylthioribose-1-phosphate (MTR-1-P) into methylthioribulose-1-phosphate (MTRu-1-P). This is Methylthioribose-1-phosphate isomerase from Magnetococcus marinus (strain ATCC BAA-1437 / JCM 17883 / MC-1).